The sequence spans 361 residues: NAD-dependent protein deacetylase hst2-1 (361 aa).

Positions Ser-16–Glu-276 constitute a Deacetylase sirtuin-type domain. Residues Gly-43 to Tyr-63 and Gln-126 to Asp-129 each bind NAD(+). His-146 serves as the catalytic Proton acceptor. Cys-154, Cys-157, Cys-178, and Cys-181 together coordinate Zn(2+). NAD(+)-binding positions include Gly-217–Ser-219, Asn-242–Glu-244, and Cys-262. Positions Glu-294–Tyr-328 form a coiled coil. Residues Arg-335–Arg-361 form a disordered region.

Belongs to the sirtuin family. Class I subfamily. Zn(2+) serves as cofactor.

It is found in the cytoplasm. It localises to the nucleus. The catalysed reaction is N(6)-acetyl-L-lysyl-[protein] + NAD(+) + H2O = 2''-O-acetyl-ADP-D-ribose + nicotinamide + L-lysyl-[protein]. Its function is as follows. NAD-dependent histone deacetylase, which could function in telomeric silencing, cell cycle progression and chromosome stability. The protein is NAD-dependent protein deacetylase hst2-1 of Emericella nidulans (strain FGSC A4 / ATCC 38163 / CBS 112.46 / NRRL 194 / M139) (Aspergillus nidulans).